Here is a 203-residue protein sequence, read N- to C-terminus: uncharacterized protein (203 aa).

4 consecutive transmembrane segments (helical) span residues 9–29 (YNVF…IVVA), 42–62 (FLFL…FFDV), 86–106 (SGVF…ALLV), and 126–146 (YPLL…SIGL). Composition is skewed to basic and acidic residues over residues 164-174 (GEPTAADKTDS) and 182-191 (DQTKSKKDGD). The tract at residues 164–203 (GEPTAADKTDSRPVVVDLDQTKSKKDGDNPPQASGDMTSL) is disordered. Polar residues predominate over residues 194–203 (PQASGDMTSL).

The protein localises to the cell membrane. This is an uncharacterized protein from Mycoplasma pneumoniae (strain ATCC 29342 / M129 / Subtype 1) (Mycoplasmoides pneumoniae).